The following is a 480-amino-acid chain: GTPase Obg (480 aa).

The 158-residue stretch at 2–159 (TRFIDRVVIH…RDLTLELKTV (158 aa)) folds into the Obg domain. The OBG-type G domain occupies 160-341 (ADVGLVGFPS…LTFALWDMVA (182 aa)). GTP contacts are provided by residues 166 to 173 (GFPSAGKS), 191 to 195 (FTTLA), 212 to 215 (DVPG), 292 to 295 (NKID), and 322 to 324 (STV). The Mg(2+) site is built by serine 173 and threonine 193. Residues 359–437 (PIPVDETAFS…IGDMTFDWEP (79 aa)) form the OCT domain. The tract at residues 441–480 (AGVDVPLTGRGTDVRLEQTDRVGADERKAARKARRQSGDE) is disordered. Basic and acidic residues predominate over residues 452–468 (TDVRLEQTDRVGADERK). Over residues 469–480 (AARKARRQSGDE) the composition is skewed to basic residues.

This sequence belongs to the TRAFAC class OBG-HflX-like GTPase superfamily. OBG GTPase family. As to quaternary structure, monomer. Requires Mg(2+) as cofactor.

The protein resides in the cytoplasm. In terms of biological role, an essential GTPase which binds GTP, GDP and possibly (p)ppGpp with moderate affinity, with high nucleotide exchange rates and a fairly low GTP hydrolysis rate. Plays a role in control of the cell cycle, stress response, ribosome biogenesis and in those bacteria that undergo differentiation, in morphogenesis control. The polypeptide is GTPase Obg (Mycolicibacterium vanbaalenii (strain DSM 7251 / JCM 13017 / BCRC 16820 / KCTC 9966 / NRRL B-24157 / PYR-1) (Mycobacterium vanbaalenii)).